Reading from the N-terminus, the 330-residue chain is (4-{4-[2-(gamma-L-glutamylamino)ethyl]phenoxymethyl}furan-2-yl)methanamine synthase (330 aa).

It belongs to the MfnF family.

The enzyme catalyses gamma-L-glutamyltyramine + [5-(aminomethyl)furan-3-yl]methyl diphosphate = (4-{4-[2-(gamma-L-glutamylamino)ethyl]phenoxymethyl}furan-2-yl)methanamine + diphosphate. It participates in cofactor biosynthesis; methanofuran biosynthesis. In terms of biological role, catalyzes the condensation between 5-(aminomethyl)-3-furanmethanol diphosphate (F1-PP) and gamma-glutamyltyramine to produce APMF-Glu. This Methanocaldococcus jannaschii (strain ATCC 43067 / DSM 2661 / JAL-1 / JCM 10045 / NBRC 100440) (Methanococcus jannaschii) protein is (4-{4-[2-(gamma-L-glutamylamino)ethyl]phenoxymethyl}furan-2-yl)methanamine synthase.